Consider the following 288-residue polypeptide: 4-diphosphocytidyl-2-C-methyl-D-erythritol kinase (288 aa).

Residue lysine 19 is part of the active site. 102–112 is a binding site for ATP; that stretch reads PMGGGIGGGSS. Aspartate 144 is an active-site residue.

Belongs to the GHMP kinase family. IspE subfamily.

The catalysed reaction is 4-CDP-2-C-methyl-D-erythritol + ATP = 4-CDP-2-C-methyl-D-erythritol 2-phosphate + ADP + H(+). Its pathway is isoprenoid biosynthesis; isopentenyl diphosphate biosynthesis via DXP pathway; isopentenyl diphosphate from 1-deoxy-D-xylulose 5-phosphate: step 3/6. Catalyzes the phosphorylation of the position 2 hydroxy group of 4-diphosphocytidyl-2C-methyl-D-erythritol. The protein is 4-diphosphocytidyl-2-C-methyl-D-erythritol kinase of Pseudomonas savastanoi pv. phaseolicola (strain 1448A / Race 6) (Pseudomonas syringae pv. phaseolicola (strain 1448A / Race 6)).